The primary structure comprises 365 residues: tRNA-specific 2-thiouridylase MnmA (365 aa).

ATP-binding positions include 14 to 21 (AMSGGVDS) and L40. The active-site Nucleophile is the C108. C108 and C204 form a disulfide bridge. G132 provides a ligand contact to ATP. Positions 154 to 156 (KDQ) are interaction with tRNA. The Cysteine persulfide intermediate role is filled by C204.

Belongs to the MnmA/TRMU family.

It is found in the cytoplasm. The catalysed reaction is S-sulfanyl-L-cysteinyl-[protein] + uridine(34) in tRNA + AH2 + ATP = 2-thiouridine(34) in tRNA + L-cysteinyl-[protein] + A + AMP + diphosphate + H(+). Its function is as follows. Catalyzes the 2-thiolation of uridine at the wobble position (U34) of tRNA, leading to the formation of s(2)U34. This Rickettsia peacockii (strain Rustic) protein is tRNA-specific 2-thiouridylase MnmA.